Here is a 127-residue protein sequence, read N- to C-terminus: uncharacterized protein (127 aa).

Residues 84–103 traverse the membrane as a helical segment; it reads IALLSLFISLSIRITCFPFF.

Its subcellular location is the membrane. This is an uncharacterized protein from Saccharomyces cerevisiae (strain ATCC 204508 / S288c) (Baker's yeast).